The primary structure comprises 458 residues: Phosphoglucosamine mutase (458 aa).

S109 functions as the Phosphoserine intermediate in the catalytic mechanism. Mg(2+) is bound by residues S109, D251, D253, and D255. S109 bears the Phosphoserine mark.

It belongs to the phosphohexose mutase family. Mg(2+) is required as a cofactor. Post-translationally, activated by phosphorylation.

The enzyme catalyses alpha-D-glucosamine 1-phosphate = D-glucosamine 6-phosphate. Its function is as follows. Catalyzes the conversion of glucosamine-6-phosphate to glucosamine-1-phosphate. The chain is Phosphoglucosamine mutase from Myxococcus xanthus (strain DK1622).